A 238-amino-acid chain; its full sequence is Cysteine-rich venom protein pseudechetoxin-like (238 aa).

The signal sequence occupies residues 1–19 (MIAFLVLLSLAAVLQQSSG). Positions 20 to 28 (TVDFASESS) are excised as a propeptide. Positions 38 to 164 (VDKHNDLRRS…STKYLYVCQY (127 aa)) constitute an SCP domain. Intrachain disulfides connect Cys-75–Cys-153, Cys-92–Cys-165, Cys-148–Cys-162, Cys-184–Cys-191, Cys-187–Cys-196, Cys-200–Cys-233, Cys-209–Cys-227, and Cys-218–Cys-231. Residues 200-233 (CKHNDDLSNCKTLVKKHKCQTEWIKSKCPATCFC) enclose the ShKT domain.

The protein belongs to the CRISP family. Expressed by the venom gland.

It is found in the secreted. Its function is as follows. Blocks olfactory (CNGA2) and retinal (CNGA1) CNG channel currents. Does not affect neither depolarization- nor caffeine-induced contraction of smooth muscle. This chain is Cysteine-rich venom protein pseudechetoxin-like, found in Pseudonaja textilis (Eastern brown snake).